We begin with the raw amino-acid sequence, 340 residues long: MSKRKLSRQQRWRVEKIQAERAERAERRARRDDTSLDAGDYGPERLGRVTAHFGRTLEVEAEDEHGDLQRHRCHLRANLEGLVTGDHVVWRVAADGSGVVVARQPRQSVLERPDARGQLKPVAANIAQILIVFAVEPAPHPNLIDRYLVAAEATGITPVLVLNKTDLLPETGSDLRTLLARYRAIGYRVVAASTQQEGGLDALHACLTERTSVFVGQSGVGKSSLIDRLLPDMQLRVGALSADSRKGTHTTTTATLYHLPAGGELIDSPGIREFGLGHLEEHQVAQGFIEFQPYLGHCRFRDCRHRQEPGCALRDAVERGDILASRFDSYRHIVDGLTTR.

Residues glutamate 20–threonine 34 show a composition bias toward basic and acidic residues. The tract at residues glutamate 20–glycine 42 is disordered. Residues arginine 116–phenylalanine 274 form the CP-type G domain. Residues asparagine 163–aspartate 166 and glycine 216–serine 224 contribute to the GTP site. Zn(2+) is bound by residues cysteine 298, cysteine 303, histidine 305, and cysteine 311.

The protein belongs to the TRAFAC class YlqF/YawG GTPase family. RsgA subfamily. Monomer. Associates with 30S ribosomal subunit, binds 16S rRNA. Zn(2+) is required as a cofactor.

The protein localises to the cytoplasm. Functionally, one of several proteins that assist in the late maturation steps of the functional core of the 30S ribosomal subunit. Helps release RbfA from mature subunits. May play a role in the assembly of ribosomal proteins into the subunit. Circularly permuted GTPase that catalyzes slow GTP hydrolysis, GTPase activity is stimulated by the 30S ribosomal subunit. The chain is Small ribosomal subunit biogenesis GTPase RsgA from Chromohalobacter salexigens (strain ATCC BAA-138 / DSM 3043 / CIP 106854 / NCIMB 13768 / 1H11).